We begin with the raw amino-acid sequence, 442 residues long: Histidine--tRNA ligase (442 aa).

Belongs to the class-II aminoacyl-tRNA synthetase family. As to quaternary structure, homodimer.

It localises to the cytoplasm. It catalyses the reaction tRNA(His) + L-histidine + ATP = L-histidyl-tRNA(His) + AMP + diphosphate + H(+). In Treponema pallidum (strain Nichols), this protein is Histidine--tRNA ligase (hisS).